Consider the following 800-residue polypeptide: Receptor-like protein 47 (800 aa).

Positions 1–31 are cleaved as a signal peptide; sequence MMHSSSVRRMITVKWSLCLIFCLTNSILVSA. The Extracellular portion of the chain corresponds to 32-759; the sequence is KHLCLPDQKD…QDEDKEEEDQ (728 aa). 2 N-linked (GlcNAc...) asparagine glycosylation sites follow: asparagine 66 and asparagine 102. LRR repeat units lie at residues 109-131, 133-156, 157-179, 190-213, 214-238, 240-262, 263-288, 294-311, 312-334, 335-358, 360-383, 385-406, 407-430, 431-453, 455-477, 479-500, 502-523, 524-550, 551-574, 621-645, 646-669, 670-693, and 695-718; these read QHLQ…SIGN, KRLK…LGNL, SYLT…SMGN, LSSV…NMSS, LSKL…LFMI, SLIL…NISS, PSNL…IFSP, YLDV…VSLP, SPIE…LRNQ, TSLE…LWSL, ELRY…VIQG, RELL…LLPV, VSMN…ICEL, DNLR…CFEN, HLYV…AISH, LQSF…LINC, DIEF…WLEL, LPNL…SLSF, SRLR…YFVG, FTIY…IGLL, KEVI…LSNL, SNLQ…LGKL, and FLEW…QIQT. Residue asparagine 155 is glycosylated (N-linked (GlcNAc...) asparagine). The N-linked (GlcNAc...) asparagine glycan is linked to asparagine 210. Asparagine 259 carries an N-linked (GlcNAc...) asparagine glycan. Residues asparagine 323 and asparagine 333 are each glycosylated (N-linked (GlcNAc...) asparagine). N-linked (GlcNAc...) asparagine glycosylation is present at asparagine 365. Residues asparagine 442, asparagine 465, asparagine 499, and asparagine 514 are each glycosylated (N-linked (GlcNAc...) asparagine). N-linked (GlcNAc...) asparagine glycosylation occurs at asparagine 668. Residue asparagine 700 is glycosylated (N-linked (GlcNAc...) asparagine). A helical transmembrane segment spans residues 760-780; the sequence is VFSWIAAAIGYVPGVVCGLTI. Residues 781–800 lie on the Cytoplasmic side of the membrane; it reads GHILVSHKRDWFMRIVSFFT.

It belongs to the RLP family.

It localises to the cell membrane. This Arabidopsis thaliana (Mouse-ear cress) protein is Receptor-like protein 47.